A 409-amino-acid chain; its full sequence is Aquaporin-10 (409 aa).

Disordered regions lie at residues 1-24 (MADA…TTMP) and 47-74 (ADVN…RPLV). Residues 12-22 (TTGTATTAPTT) are compositionally biased toward low complexity. The next 2 helical transmembrane spans lie at 110 to 130 (FLGS…VVLS) and 138 to 158 (LSIN…AGGI). The NPA 1 signature appears at 164-166 (NPA). A helical membrane pass occupies residues 184 to 204 (VYMFAQYAGCICASAIVHAIY). Asn215 carries N-linked (GlcNAc...) asparagine glycosylation. Transmembrane regions (helical) follow at residues 241 to 261 (TGLA…LALT) and 270 to 290 (GGVV…AYGF). The NPA 2 signature appears at 297 to 299 (NPA). Residues 339–359 (IPVVGPHLGALLGAAIYFFFI) traverse the membrane as a helical segment.

The protein belongs to the MIP/aquaporin (TC 1.A.8) family.

It localises to the cell membrane. In terms of biological role, aquaglyceroporin that may modulate the water content and osmolytes during anhydrobiosis. The sequence is that of Aquaporin-10 from Milnesium tardigradum (Water bear).